The chain runs to 895 residues: Androgen receptor (895 aa).

The segment at M1 to K533 is modulating. Residues M1–A562 are interaction with ZNF318. Disordered regions lie at residues V33–P155 and Q175–G211. Composition is skewed to low complexity over residues A44–Q81 and Q175–A200. S66 carries the post-translational modification Phosphoserine; by CDK9. S79 bears the Phosphoserine mark. Over residues P201–G211 the composition is skewed to polar residues. Y208 carries the phosphotyrosine; by CSK modification. Position 241 is a phosphoserine (S241). Y252 carries the post-translational modification Phosphotyrosine; by CSK and TNK2. Y292, Y331, Y342, and Y347 each carry phosphotyrosine; by CSK. Residue Y348 is modified to Phosphotyrosine; by CSK and TNK2. K371 is covalently cross-linked (Glycyl lysine isopeptide (Lys-Gly) (interchain with G-Cter in SUMO)). Phosphotyrosine; by CSK is present on Y378. Residue K496 forms a Glycyl lysine isopeptide (Lys-Gly) (interchain with G-Cter in SUMO) linkage. Residues Y510 and Y527 each carry the phosphotyrosine; by CSK modification. Positions Y527–T894 are interaction with LPXN. The segment at residues T534–L607 is a DNA-binding region (nuclear receptor). 2 NR C4-type zinc fingers span residues C535–C555 and C571–C595. Residues Y547 to V637 form an interaction with HIPK3 region. The tract at residues Q567–T894 is interaction with CCAR1. Residues M600 to T894 form an interaction with KAT7 region. A Phosphoserine; by STK4/MST1 modification is found at S626. In terms of domain architecture, NR LBD spans E644 to I875. 2 residues coordinate 17beta-hydroxy-5alpha-androstan-3-one: N681 and R728. Residues K821 and K823 each participate in a glycyl lysine isopeptide (Lys-Gly) (interchain with G-Cter in ubiquitin) cross-link. Residue T853 coordinates 17beta-hydroxy-5alpha-androstan-3-one. A Phosphotyrosine; by CSK modification is found at Y891.

This sequence belongs to the nuclear hormone receptor family. NR3 subfamily. As to quaternary structure, binds DNA as a homodimer. Part of a ternary complex containing AR, EFCAB6/DJBP and PARK7. Interacts with HIPK3 and NR0B2 in the presence of androgen. The ligand binding domain interacts with KAT7/HBO1 in the presence of dihydrotestosterone. Interacts with EFCAB6/DJBP, PQBP1, RANBP9, RBAK, SPDEF, SRA1, TGFB1I1 and RREB1. Interacts with ZMIZ1/ZIMP10 and ZMIZ2/ZMIP7 which both enhance its transactivation activity. Interacts with SLC30A9 and RAD54L2/ARIP4. Interacts with MACROD1 (via macro domain). Interacts via the ligand-binding domain with LXXLL and FXXLF motifs from NCOA1, NCOA2, NCOA3 and MAGEA11. Interacts (via nuclear receptor DNA binding domain and nuclear receptor ligand binding domain) with NCOA4. The AR N-terminal poly-Gln region binds Ran resulting in enhancement of AR-mediated transactivation. Ran-binding decreases as the poly-Gln length increases. Interacts with HIP1 (via coiled coil domain). Interacts (via ligand-binding domain) with TRIM68. Interacts with TNK2. Interacts with USP26. Interacts with RNF6. Interacts (regulated by RNF6 probably through polyubiquitination) with RNF14; regulates AR transcriptional activity. Interacts with PRMT2 and TRIM24. Interacts with RACK1. Interacts with RANBP10; this interaction enhances dihydrotestosterone-induced AR transcriptional activity. Interacts with PRPF6 in a hormone-independent way; this interaction enhances dihydrotestosterone-induced AR transcriptional activity. Interacts with STK4/MST1. Interacts with ZIPK/DAPK3. Interacts with LPXN. Interacts with MAK. Part of a complex containing AR, MAK and NCOA3. Interacts with CRY1. Interacts with CCAR1 and GATA2. Interacts with ZNF318. Interacts with BUD31. Interacts with ARID4A. Interacts with ARID4B. Interacts (via NR LBD domain) with ZBTB7A; the interaction is direct and androgen-dependent. Interacts with NCOR1. Interacts with NCOR2. Interacts with CRY2 in a ligand-dependent manner. Phosphorylated in prostate cancer cells in response to several growth factors including EGF. Phosphorylation is induced by c-Src kinase (CSK). Tyr-510 is one of the major phosphorylation sites and an increase in phosphorylation and Src kinase activity is associated with prostate cancer progression. Phosphorylation by TNK2 enhances the DNA-binding and transcriptional activity. Phosphorylation at Ser-66 by CDK9 regulates AR promoter selectivity and cell growth. Post-translationally, sumoylated on Lys-371 (major) and Lys-496. Ubiquitinated. Deubiquitinated by USP26. 'Lys-6' and 'Lys-27'-linked polyubiquitination by RNF6 modulates AR transcriptional activity and specificity. In terms of processing, palmitoylated by ZDHHC7 and ZDHHC21. Palmitoylation is required for plasma membrane targeting and for rapid intracellular signaling via ERK and AKT kinases and cAMP generation.

The protein resides in the nucleus. It localises to the cytoplasm. Functionally, steroid hormone receptors are ligand-activated transcription factors that regulate eukaryotic gene expression and affect cellular proliferation and differentiation in target tissues. Transcription factor activity is modulated by bound coactivator and corepressor proteins like ZBTB7A that recruits NCOR1 and NCOR2 to the androgen response elements/ARE on target genes, negatively regulating androgen receptor signaling and androgen-induced cell proliferation. Transcription activation is also down-regulated by NR0B2. Activated, but not phosphorylated, by HIPK3 and ZIPK/DAPK3. This is Androgen receptor (AR) from Papio hamadryas (Hamadryas baboon).